The sequence spans 1117 residues: MDLLSGTHIFAVLLACIVFQSGAQEKNYTIREEMPENVLIGDLLKDLNLSLIPDRSLTTPMQFKLVYKTGDVPLIRIEEGTGEIFTTGARIDREKLCAGIVVDAHCFYEVEVAVLPDEIFRLVKIRFLIEDINDNAPLFPATVINISIPENSAINSRYALPATIDPDTGINGVQNYHLIKGQSIFGLDVIETPEGEKMPQLIVQKELDREEKDTYVMKIKVEDGGFPQRSSTAILQVSVADTNDNRPVFKENEIEVSIPENAPVGSSVTQLHATDADIGENAKIHFYFSNLISNMAKKLFHLNSTTGLITIKEPLDREESPNHKLLVLASDGGLTPARAMVLVNVTDINDNIPSIDIRYIINPINGTVVLSENAPLNTKIALITVTDKDADHNGWVSCFTDHEVPFRLRPVFSNQFLLETAAYLDYESTREYAIKLLAADAGKPPLNQSSMLLIKVKDENDNAPVFTQPFLSLSVPENNSPGTQLTKISAMDADSGRNAEINYLLGFDAPSEFNLDHRTGILTAVKKLDREKQEKYSFTVLAKDNGMPPLMTNATVLVTVLDQNDNSPVFTHNEYNFYVPENLPRHGTVGLITVTDPDYGENSAVILSILDANDDFTIDPQTGVIQPNISFDREKQESYTFYVKAEDGGRISRSSTAKVTINVVDVNDNKPVFVVPSSNYSFELVPPSTNPGTVVFTVVAIDNDTGMNAELRYSMVGGNTKGLFIIDQTSGNITLKEKCVFADLGLHRLVVKAKDLGQPDSLFNVVNVNLFVNESVTNATLIYELVRKNIETPVTQNIETTDASSPSSDYVKIVVAIVAGTITVILVIFITAVVRCQQSPHLKAAQKNKQNSEWVTPNPENRQMIMMKKKKKKKKKHAPKNLLLNFVTIEEAKADGADNNRSSITLDLPIELEEQTMGKYNWGTTPTTFKPDSADLARHYKSASPQPTFQIQPETPLNSKHHIIQELPLDNTFVGCDSISKCSSSSSDPYSVSECSYPVTTFKTPVSVHTRPPMKEAIRFHTPMKETTTVEIWTHPQPQRKSEGKRAGKSQRRVTFHLPEGSQESSSDGGLGDHDTGSLPSTSHALPLGYPQEEYFDHAAPNNRTEGDGNSDPESGK.

A signal peptide spans 1–23; it reads MDLLSGTHIFAVLLACIVFQSGA. The Extracellular portion of the chain corresponds to 24-812; that stretch reads QEKNYTIREE…ASSPSSDYVK (789 aa). N27 and N48 each carry an N-linked (GlcNAc...) asparagine glycan. Cadherin domains follow at residues 27-139, 140-249, 250-355, 362-466, 467-570, 571-673, and 677-795; these read NYTI…APLF, PATV…RPVF, KENE…IPSI, NPIN…APVF, TQPF…SPVF, THNE…KPVF, and SSNY…TPVT. Residue N344 is glycosylated (N-linked (GlcNAc...) asparagine). A glycan (N-linked (GlcNAc...) asparagine) is linked at N553. A helical transmembrane segment spans residues 813-833; that stretch reads IVVAIVAGTITVILVIFITAV. At 834–1117 the chain is on the cytoplasmic side; it reads VRCQQSPHLK…DGNSDPESGK (284 aa). The span at 1029 to 1039 shows a compositional bias: polar residues; it reads TVEIWTHPQPQ. Residues 1029–1117 form a disordered region; that stretch reads TVEIWTHPQP…DGNSDPESGK (89 aa).

In terms of tissue distribution, expressed in adrenal gland, brain, heart, kidney, lung, prostate, skeletal muscle, testis and thymus.

It localises to the cell membrane. Functionally, potential calcium-dependent cell-adhesion protein. The polypeptide is Protocadherin-11 X-linked (PCDH11X) (Sus scrofa (Pig)).